The chain runs to 197 residues: Probable nicotinate-nucleotide adenylyltransferase (197 aa).

It belongs to the NadD family.

The catalysed reaction is nicotinate beta-D-ribonucleotide + ATP + H(+) = deamido-NAD(+) + diphosphate. It functions in the pathway cofactor biosynthesis; NAD(+) biosynthesis; deamido-NAD(+) from nicotinate D-ribonucleotide: step 1/1. Its function is as follows. Catalyzes the reversible adenylation of nicotinate mononucleotide (NaMN) to nicotinic acid adenine dinucleotide (NaAD). This Porphyromonas gingivalis (strain ATCC 33277 / DSM 20709 / CIP 103683 / JCM 12257 / NCTC 11834 / 2561) protein is Probable nicotinate-nucleotide adenylyltransferase.